Here is a 329-residue protein sequence, read N- to C-terminus: uncharacterized protein (329 aa).

Positions 38-184 (IVKLILKSQE…MACLMRAKNF (147 aa)) constitute an SIS domain. 56-61 (GVGKSA) is an ATP binding site. 2 CBS domains span residues 211–267 (QTTN…GVSL) and 270–329 (EVRH…GLKA).

The protein belongs to the SIS family. GutQ/KpsF subfamily.

This is an uncharacterized protein from Helicobacter pylori (strain ATCC 700392 / 26695) (Campylobacter pylori).